The sequence spans 182 residues: Large ribosomal subunit protein uL10 (182 aa).

The protein belongs to the universal ribosomal protein uL10 family. Part of the ribosomal stalk of the 50S ribosomal subunit. The N-terminus interacts with L11 and the large rRNA to form the base of the stalk. The C-terminus forms an elongated spine to which L12 dimers bind in a sequential fashion forming a multimeric L10(L12)X complex.

In terms of biological role, forms part of the ribosomal stalk, playing a central role in the interaction of the ribosome with GTP-bound translation factors. In Koribacter versatilis (strain Ellin345), this protein is Large ribosomal subunit protein uL10.